A 59-amino-acid chain; its full sequence is Early protein GP1A (59 aa).

The chain is Early protein GP1A (1A) from Bacillus phage PZA (Bacteriophage PZA).